A 302-amino-acid polypeptide reads, in one-letter code: Aspartate carbamoyltransferase catalytic subunit (302 aa).

The carbamoyl phosphate site is built by Arg-55 and Thr-56. Lys-83 is an L-aspartate binding site. Arg-105, His-133, and Gln-136 together coordinate carbamoyl phosphate. Residues Arg-166 and Arg-222 each coordinate L-aspartate. 2 residues coordinate carbamoyl phosphate: Gly-262 and Pro-263.

The protein belongs to the aspartate/ornithine carbamoyltransferase superfamily. ATCase family. Heterododecamer (2C3:3R2) of six catalytic PyrB chains organized as two trimers (C3), and six regulatory PyrI chains organized as three dimers (R2).

The enzyme catalyses carbamoyl phosphate + L-aspartate = N-carbamoyl-L-aspartate + phosphate + H(+). Its pathway is pyrimidine metabolism; UMP biosynthesis via de novo pathway; (S)-dihydroorotate from bicarbonate: step 2/3. In terms of biological role, catalyzes the condensation of carbamoyl phosphate and aspartate to form carbamoyl aspartate and inorganic phosphate, the committed step in the de novo pyrimidine nucleotide biosynthesis pathway. The chain is Aspartate carbamoyltransferase catalytic subunit from Solibacter usitatus (strain Ellin6076).